The following is a 116-amino-acid chain: MRRLAILLSLAGIADSSYLLLSEAVPCPTGVCASISVFSLPPFVPALLGLCWFVLSIVVFTAGVNRALLTFWRFSGVFGESFLGTYAVLHGYFCPYCFTAYGIGIVVVAISEKLYG.

The next 3 membrane-spanning stretches (helical) occupy residues 5–27, 42–64, and 88–110; these read AILL…AVPC, PFVP…TAGV, and VLHG…VVAI.

It is found in the cell membrane. This is an uncharacterized protein from Archaeoglobus fulgidus (strain ATCC 49558 / DSM 4304 / JCM 9628 / NBRC 100126 / VC-16).